The sequence spans 355 residues: Probable dual-specificity RNA methyltransferase RlmN (355 aa).

Glu-89 functions as the Proton acceptor in the catalytic mechanism. The region spanning 95-322 (YENRKTVCLS…KRLGVPTSIR (228 aa)) is the Radical SAM core domain. Cys-102 and Cys-333 are oxidised to a cystine. Residues Cys-109, Cys-113, and Cys-116 each contribute to the [4Fe-4S] cluster site. S-adenosyl-L-methionine contacts are provided by residues 159 to 160 (GE), Ser-191, 214 to 216 (SLH), and Asn-290. Cys-333 serves as the catalytic S-methylcysteine intermediate.

Belongs to the radical SAM superfamily. RlmN family. It depends on [4Fe-4S] cluster as a cofactor.

It localises to the cytoplasm. It carries out the reaction adenosine(2503) in 23S rRNA + 2 reduced [2Fe-2S]-[ferredoxin] + 2 S-adenosyl-L-methionine = 2-methyladenosine(2503) in 23S rRNA + 5'-deoxyadenosine + L-methionine + 2 oxidized [2Fe-2S]-[ferredoxin] + S-adenosyl-L-homocysteine. The catalysed reaction is adenosine(37) in tRNA + 2 reduced [2Fe-2S]-[ferredoxin] + 2 S-adenosyl-L-methionine = 2-methyladenosine(37) in tRNA + 5'-deoxyadenosine + L-methionine + 2 oxidized [2Fe-2S]-[ferredoxin] + S-adenosyl-L-homocysteine. Its function is as follows. Specifically methylates position 2 of adenine 2503 in 23S rRNA and position 2 of adenine 37 in tRNAs. The protein is Probable dual-specificity RNA methyltransferase RlmN of Thermus thermophilus (strain ATCC 27634 / DSM 579 / HB8).